The following is a 96-amino-acid chain: Large ribosomal subunit protein bL21 (96 aa).

Belongs to the bacterial ribosomal protein bL21 family. As to quaternary structure, part of the 50S ribosomal subunit. Contacts protein L20.

This protein binds to 23S rRNA in the presence of protein L20. This chain is Large ribosomal subunit protein bL21, found in Chlorobium phaeobacteroides (strain BS1).